Reading from the N-terminus, the 752-residue chain is Photosystem I P700 chlorophyll a apoprotein A1 (752 aa).

8 helical membrane-spanning segments follow: residues 73–96 (IFSA…FHGA), 159–182 (LYWT…FHYH), 198–222 (MNHH…HISL), 294–312 (TAHH…GHMY), 349–372 (WHAQ…HHMY), 388–414 (LSLF…IFMV), 436–458 (AIIS…LYIH), and 533–551 (FLVH…LILL). Residues Cys575 and Cys584 each contribute to the [4Fe-4S] cluster site. The next 2 membrane-spanning stretches (helical) occupy residues 591–612 (HIFL…HFSW) and 666–688 (LSAY…MFLF). His677 is a binding site for chlorophyll a'. Chlorophyll a-binding residues include Met685 and Tyr693. A phylloquinone-binding site is contributed by Trp694. The chain crosses the membrane as a helical span at residues 726–746 (AVGLAHYLLGGIGTTWSFFLA).

Belongs to the PsaA/PsaB family. The PsaA/B heterodimer binds the P700 chlorophyll special pair and subsequent electron acceptors. PSI consists of a core antenna complex that captures photons, and an electron transfer chain that converts photonic excitation into a charge separation. The eukaryotic PSI reaction center is composed of at least 11 subunits. P700 is a chlorophyll a/chlorophyll a' dimer, A0 is one or more chlorophyll a, A1 is one or both phylloquinones and FX is a shared 4Fe-4S iron-sulfur center. is required as a cofactor.

It is found in the plastid. The protein localises to the chloroplast thylakoid membrane. The catalysed reaction is reduced [plastocyanin] + hnu + oxidized [2Fe-2S]-[ferredoxin] = oxidized [plastocyanin] + reduced [2Fe-2S]-[ferredoxin]. Functionally, psaA and PsaB bind P700, the primary electron donor of photosystem I (PSI), as well as the electron acceptors A0, A1 and FX. PSI is a plastocyanin/cytochrome c6-ferredoxin oxidoreductase, converting photonic excitation into a charge separation, which transfers an electron from the donor P700 chlorophyll pair to the spectroscopically characterized acceptors A0, A1, FX, FA and FB in turn. Oxidized P700 is reduced on the lumenal side of the thylakoid membrane by plastocyanin or cytochrome c6. This is Photosystem I P700 chlorophyll a apoprotein A1 from Emiliania huxleyi (Coccolithophore).